The chain runs to 100 residues: Urease subunit gamma (100 aa).

The protein belongs to the urease gamma subunit family. As to quaternary structure, heterotrimer of UreA (gamma), UreB (beta) and UreC (alpha) subunits. Three heterotrimers associate to form the active enzyme.

The protein resides in the cytoplasm. The enzyme catalyses urea + 2 H2O + H(+) = hydrogencarbonate + 2 NH4(+). Its pathway is nitrogen metabolism; urea degradation; CO(2) and NH(3) from urea (urease route): step 1/1. The sequence is that of Urease subunit gamma from Rhizobium etli (strain CIAT 652).